Consider the following 83-residue polypeptide: Putative defensin-like protein 67 (83 aa).

A signal peptide spans 1 to 24; the sequence is MGSSKLMVTCIVVAMLTISCDILS. Cystine bridges form between cysteine 38/cysteine 82, cysteine 42/cysteine 65, cysteine 51/cysteine 80, and cysteine 55/cysteine 81.

This sequence belongs to the DEFL family.

It is found in the secreted. This Arabidopsis thaliana (Mouse-ear cress) protein is Putative defensin-like protein 67.